Consider the following 191-residue polypeptide: Small ribosomal subunit protein uS7 (191 aa).

This sequence belongs to the universal ribosomal protein uS7 family. As to quaternary structure, part of the 30S ribosomal subunit.

Functionally, one of the primary rRNA binding proteins, it binds directly to 16S rRNA where it nucleates assembly of the head domain of the 30S subunit. Is located at the subunit interface close to the decoding center. In Methanocaldococcus jannaschii (strain ATCC 43067 / DSM 2661 / JAL-1 / JCM 10045 / NBRC 100440) (Methanococcus jannaschii), this protein is Small ribosomal subunit protein uS7.